The primary structure comprises 414 residues: Serine hydroxymethyltransferase (414 aa).

(6S)-5,6,7,8-tetrahydrofolate contacts are provided by residues L117 and 121–123; that span reads GHL. K226 is modified (N6-(pyridoxal phosphate)lysine). 349–351 lines the (6S)-5,6,7,8-tetrahydrofolate pocket; that stretch reads SPF.

The protein belongs to the SHMT family. Homodimer. Requires pyridoxal 5'-phosphate as cofactor.

It localises to the cytoplasm. The catalysed reaction is (6R)-5,10-methylene-5,6,7,8-tetrahydrofolate + glycine + H2O = (6S)-5,6,7,8-tetrahydrofolate + L-serine. It functions in the pathway one-carbon metabolism; tetrahydrofolate interconversion. It participates in amino-acid biosynthesis; glycine biosynthesis; glycine from L-serine: step 1/1. Its function is as follows. Catalyzes the reversible interconversion of serine and glycine with tetrahydrofolate (THF) serving as the one-carbon carrier. This reaction serves as the major source of one-carbon groups required for the biosynthesis of purines, thymidylate, methionine, and other important biomolecules. Also exhibits THF-independent aldolase activity toward beta-hydroxyamino acids, producing glycine and aldehydes, via a retro-aldol mechanism. The chain is Serine hydroxymethyltransferase from Desulfovibrio desulfuricans (strain ATCC 27774 / DSM 6949 / MB).